We begin with the raw amino-acid sequence, 949 residues long: Zinc finger CCHC domain-containing protein 14 (949 aa).

Disordered stretches follow at residues 25–44 (SSLNGGGGHGGKGAPGPGGA), 59–92 (EAPVSSVSNSLENALHTSAHSTEESLPKRPLGKH), 200–221 (STSSPPQQLQSPSPGNPSLSKV), 236–262 (AGIPSSQSGAQHHGQHPAGSAAPLPHC), 355–457 (KEKS…DKEK), and 739–779 (PESS…PQPA). Positions 28 to 43 (NGGGGHGGKGAPGPGG) are enriched in gly residues. A compositionally biased stretch (polar residues) spans 61 to 78 (PVSSVSNSLENALHTSAH). Residues 200 to 219 (STSSPPQQLQSPSPGNPSLS) show a composition bias toward low complexity. Positions 395–411 (HAAELRVEVEQPHHQLP) are enriched in basic and acidic residues. Residues 416 to 425 (SSEYSSSSSS) show a composition bias toward low complexity. The segment covering 431 to 457 (AREESSDSAEENDRRVEIHLESSDKEK) has biased composition (basic and acidic residues). The CCHC-type zinc-finger motif lies at 906-923 (LSCYNCGATGHRAQDCKQ).

This is Zinc finger CCHC domain-containing protein 14 (ZCCHC14) from Homo sapiens (Human).